The chain runs to 216 residues: Cytidylate kinase (216 aa).

7–15 is an ATP binding site; sequence GPSGTGKST.

The protein belongs to the cytidylate kinase family. Type 1 subfamily.

Its subcellular location is the cytoplasm. The enzyme catalyses CMP + ATP = CDP + ADP. It carries out the reaction dCMP + ATP = dCDP + ADP. In Chlamydia caviae (strain ATCC VR-813 / DSM 19441 / 03DC25 / GPIC) (Chlamydophila caviae), this protein is Cytidylate kinase.